The following is a 127-amino-acid chain: CST complex subunit TEN1 (127 aa).

It belongs to the TEN1 family. In terms of assembly, component of the CST complex, composed of CTC1, TEN1 and STN1. Interacts with STN1. No interaction with POT1A, but competes with it for STN1 binding. As to expression, ubiquitous. High expression in meristematic tissues and in vasculature.

It is found in the nucleus. The protein resides in the chromosome. The protein localises to the telomere. In terms of biological role, required for the maintenance of meristems and stem cells through the reduction of DNA damage. Promotes telomere integrity by maintaining telomere length and proper architecture of the chromosome terminus. Negatively regulates telomerase repeat addition processivity. Hampers contacts between enzymatically active telomerase and CST complex. This Arabidopsis thaliana (Mouse-ear cress) protein is CST complex subunit TEN1.